Reading from the N-terminus, the 1328-residue chain is ATP-dependent DNA helicase hus2/rqh1 (1328 aa).

2 stretches are compositionally biased toward low complexity: residues 217 to 236 and 244 to 254; these read NNLPFPRLNNNNTNNNNDNN and ASPTPSSVSSQ. The tract at residues 217 to 254 is disordered; that stretch reads NNLPFPRLNNNNTNNNNDNNAIEKRDSASPTPSSVSSQ. One can recognise a Helicase ATP-binding domain in the interval 528–707; sequence INGTLSGKDV…INTLRMENCL (180 aa). Position 555 to 562 (555 to 562) interacts with ATP; it reads AVIEGGAS. A DEAH box motif is present at residues 651-654; the sequence is DEAH. The region spanning 728-876 is the Helicase C-terminal domain; that stretch reads LYTELYRFIS…ETKERQRQML (149 aa). Residues 1115–1195 enclose the HRDC domain; sequence IDVMTRCLKD…QKFIDEKEQN (81 aa). 2 disordered regions span residues 1224–1247 and 1260–1328; these read EQGFSDDSDSVYEPSSPIEEGDEE and NSQS…QNYR. The segment covering 1260-1269 has biased composition (polar residues); the sequence is NSQSLTQTGS. Over residues 1283–1300 the composition is skewed to basic residues; sequence KSYRHKRGSTSYSRKRKY.

Belongs to the helicase family. RecQ subfamily. As to quaternary structure, interacts with top3.

It is found in the nucleus. The enzyme catalyses Couples ATP hydrolysis with the unwinding of duplex DNA by translocating in the 3'-5' direction.. It catalyses the reaction ATP + H2O = ADP + phosphate + H(+). Its function is as follows. ATP-dependent 3'-5' DNA-helicase. Has a role in the repair of UV-induced DNA damage in G2 via recombination-mediated repair. Also has a role in the repair of infrared-induced double DNA strand breaks. The chain is ATP-dependent DNA helicase hus2/rqh1 from Schizosaccharomyces pombe (strain 972 / ATCC 24843) (Fission yeast).